Consider the following 356-residue polypeptide: Protein MGF 360-3L (356 aa).

Residues 61–93 (KLNTALVLAVKENNDDLIMLFTEWGANINYGLL) form an ANK repeat.

The protein belongs to the asfivirus MGF 360 family.

Functionally, plays a role in virus cell tropism, and may be required for efficient virus replication in macrophages. In Ornithodoros (relapsing fever ticks), this protein is Protein MGF 360-3L.